A 160-amino-acid polypeptide reads, in one-letter code: Serine-protein kinase RsbW (160 aa).

It belongs to the anti-sigma-factor family.

The enzyme catalyses L-seryl-[protein] + ATP = O-phospho-L-seryl-[protein] + ADP + H(+). The catalysed reaction is L-threonyl-[protein] + ATP = O-phospho-L-threonyl-[protein] + ADP + H(+). Its function is as follows. Negative regulator of sigma-B activity. Phosphorylates and inactivates its specific antagonist protein, RsbV. Upon phosphorylation of RsbV, RsbW is released and binds to sigma-B, thereby blocking its ability to form an RNA polymerase holoenzyme (E-sigma-B). This chain is Serine-protein kinase RsbW, found in Bacillus cereus (strain G9842).